Reading from the N-terminus, the 234-residue chain is Purine nucleoside phosphorylase DeoD-type (234 aa).

H4 provides a ligand contact to a purine D-ribonucleoside. Phosphate contacts are provided by residues G20, R24, R43, and 87–90; that span reads RVGT. A purine D-ribonucleoside-binding positions include E162, 178 to 180, and 202 to 203; these read EME and SD. D203 (proton donor) is an active-site residue.

The protein belongs to the PNP/UDP phosphorylase family. As to quaternary structure, homohexamer; trimer of homodimers.

The enzyme catalyses a purine D-ribonucleoside + phosphate = a purine nucleobase + alpha-D-ribose 1-phosphate. The catalysed reaction is a purine 2'-deoxy-D-ribonucleoside + phosphate = a purine nucleobase + 2-deoxy-alpha-D-ribose 1-phosphate. Its function is as follows. Catalyzes the reversible phosphorolytic breakdown of the N-glycosidic bond in the beta-(deoxy)ribonucleoside molecules, with the formation of the corresponding free purine bases and pentose-1-phosphate. This is Purine nucleoside phosphorylase DeoD-type from Anoxybacillus flavithermus (strain DSM 21510 / WK1).